The primary structure comprises 218 residues: MKKFVYKYSFGALLLLSGLSSCCPSSYGSTPAKNTAEIKEESVILREEPESGCKKKSSCCLRKFFSRKKPKEKPEPVLPNFKSYADPMTDAERKDLSFVVSAAAEKSSIALAMAQGEIKGALSRIREIHPLVLLQALAEDPALIAGMKKMQGRDWVWNIFMTELSKAFSQAASLGAFSVADVAAFASTLGLDSGTVTSIVDGERWAELIDVVIQSPTI.

Positions 1–21 (MKKFVYKYSFGALLLLSGLSS) are cleaved as a signal peptide. C22 carries the N-palmitoyl cysteine lipid modification. C22 carries the S-diacylglycerol cysteine lipid modification.

It belongs to the chlamydial CPn_0875/CT_734/TC_0107 family.

The protein resides in the cell membrane. This is an uncharacterized protein from Chlamydia muridarum (strain MoPn / Nigg).